A 299-amino-acid chain; its full sequence is Acetylglutamate kinase (299 aa).

Residues 62 to 63 (GG), Arg-84, and Asn-188 contribute to the substrate site.

The protein belongs to the acetylglutamate kinase family. ArgB subfamily.

The protein resides in the cytoplasm. It carries out the reaction N-acetyl-L-glutamate + ATP = N-acetyl-L-glutamyl 5-phosphate + ADP. The protein operates within amino-acid biosynthesis; L-arginine biosynthesis; N(2)-acetyl-L-ornithine from L-glutamate: step 2/4. Its function is as follows. Catalyzes the ATP-dependent phosphorylation of N-acetyl-L-glutamate. This is Acetylglutamate kinase from Methanosarcina acetivorans (strain ATCC 35395 / DSM 2834 / JCM 12185 / C2A).